Consider the following 307-residue polypeptide: Ribonuclease Z (307 aa).

H63, H65, D67, H68, H141, D212, and H270 together coordinate Zn(2+). The active-site Proton acceptor is D67.

It belongs to the RNase Z family. In terms of assembly, homodimer. The cofactor is Zn(2+).

It carries out the reaction Endonucleolytic cleavage of RNA, removing extra 3' nucleotides from tRNA precursor, generating 3' termini of tRNAs. A 3'-hydroxy group is left at the tRNA terminus and a 5'-phosphoryl group is left at the trailer molecule.. Functionally, zinc phosphodiesterase, which displays some tRNA 3'-processing endonuclease activity. Probably involved in tRNA maturation, by removing a 3'-trailer from precursor tRNA. In Bacillus cereus (strain ZK / E33L), this protein is Ribonuclease Z.